Here is a 99-residue protein sequence, read N- to C-terminus: UPF0473 protein SMU_2077c (99 aa).

Belongs to the UPF0473 family.

The chain is UPF0473 protein SMU_2077c from Streptococcus mutans serotype c (strain ATCC 700610 / UA159).